The sequence spans 78 residues: Small ribosomal subunit protein eS21 (78 aa).

Belongs to the eukaryotic ribosomal protein eS21 family.

The polypeptide is Small ribosomal subunit protein eS21 (rps21) (Dictyostelium discoideum (Social amoeba)).